We begin with the raw amino-acid sequence, 339 residues long: DNA-directed RNA polymerase subunit alpha (339 aa).

The tract at residues 1–233 (MVREEVAGST…DLFLPFLHAE (233 aa)) is alpha N-terminal domain (alpha-NTD). The interval 264–339 (KKGIPLNCIF…IDLLKNKLSF (76 aa)) is alpha C-terminal domain (alpha-CTD).

This sequence belongs to the RNA polymerase alpha chain family. As to quaternary structure, in plastids the minimal PEP RNA polymerase catalytic core is composed of four subunits: alpha, beta, beta', and beta''. When a (nuclear-encoded) sigma factor is associated with the core the holoenzyme is formed, which can initiate transcription.

Its subcellular location is the plastid. It is found in the chloroplast. The catalysed reaction is RNA(n) + a ribonucleoside 5'-triphosphate = RNA(n+1) + diphosphate. DNA-dependent RNA polymerase catalyzes the transcription of DNA into RNA using the four ribonucleoside triphosphates as substrates. This Elymus hystrix (Eastern bottlebrush grass) protein is DNA-directed RNA polymerase subunit alpha.